Here is a 368-residue protein sequence, read N- to C-terminus: Alcohol dehydrogenase 6 (368 aa).

Ser-23 carries the post-translational modification Phosphoserine. Positions 47, 69, 99, 102, 105, 113, and 175 each coordinate Zn(2+). NAD(+)-binding positions include 200-205 (GLGGVG), Asp-224, Lys-229, and 293-295 (VGV).

This sequence belongs to the zinc-containing alcohol dehydrogenase family. Class-V subfamily. In terms of assembly, dimer. Zn(2+) serves as cofactor. As to expression, stomach and liver.

It localises to the cytoplasm. It catalyses the reaction a primary alcohol + NAD(+) = an aldehyde + NADH + H(+). It carries out the reaction a secondary alcohol + NAD(+) = a ketone + NADH + H(+). With respect to regulation, inhibited partially by pyrazole (10 mM) in the reaction mixture containing 100 mM ethanol at pH 10.0. Alcohol dehydrogenase. Catalyzes the NAD-dependent oxidation of primary alcohols to the corresponding aldehydes. Oxidizes secondary alcohols to the corresponding ketones. The polypeptide is Alcohol dehydrogenase 6 (ADH6) (Homo sapiens (Human)).